We begin with the raw amino-acid sequence, 289 residues long: CBY1-interacting BAR domain-containing protein 1 (289 aa).

A mitochondrion-targeting transit peptide spans methionine 1–lysine 47. The segment at asparagine 10–valine 220 is BAR-like. A coiled-coil region spans residues lysine 107–lysine 178. Residues leucine 265–lysine 289 are disordered. Positions alanine 271–lysine 289 are enriched in acidic residues.

Belongs to the CIBAR family. In terms of assembly, homodimer (via BAR-like domain). Heterodimer with FAM92B (via BAR-like domains). Interacts (via BAR-like domain) with CBY1; this interaction is required for targeting FAM92A to centriole and cilium basal body. Interacts (via BAR-like domain) with CBY3; both proteins form a ninefold symmetric structure at the flagellar base; are recruited to the annulus in a mutually dependent manner and regulate annulus positionning.

Its subcellular location is the cytoplasm. It localises to the cytoskeleton. The protein resides in the microtubule organizing center. The protein localises to the centrosome. It is found in the centriole. Its subcellular location is the cilium basal body. It localises to the cell projection. The protein resides in the cilium. The protein localises to the nucleus. It is found in the mitochondrion inner membrane. Its subcellular location is the flagellum. In terms of biological role, plays a critical role in regulating mitochondrial ultrastructure and function by maintaining the integrity of mitochondrial morphology, particularly the organization of cristae. Preferentially binds to negatively charged phospholipids like cardiolipin and phosphatidylinositol 4,5-bisphosphate enhancing its interaction with mitochondrial membranes. Induces membrane curvature and tubulation, which are critical for maintaining mitochondrial ultrastructure and the organization of cristae. Plays a crucial role in ciliogenesis. May play a role in limb development through its role in ciliogenesis. Plays a key role in the correct positioning of the annulus, a septin-based ring structure in the sperm flagellum, serving both as a physical barrier and a membrane diffusion barrier that separates the midpiece (MP) from the principal piece (PP). This positioning is essential for proper sperm motility and function. Interacts with CBY3 to form a complex which localizes to the curved membrane region of the flagellar pocket. By doing so, may provide stability and rigidity to the periannular membrane to prevent membrane deformation. This function is crucial for halting annulus migration at the proximal end of the fibrous sheath-containing PP. This chain is CBY1-interacting BAR domain-containing protein 1, found in Homo sapiens (Human).